Consider the following 469-residue polypeptide: Glutamate--tRNA ligase (469 aa).

A 'HIGH' region motif is present at residues 9–19; it reads PSPTGFLHVGG. Positions 98, 100, 125, and 127 each coordinate Zn(2+). A 'KMSKS' region motif is present at residues 236–240; it reads KLSKR. Lys239 contacts ATP.

It belongs to the class-I aminoacyl-tRNA synthetase family. Glutamate--tRNA ligase type 1 subfamily. As to quaternary structure, monomer. Requires Zn(2+) as cofactor.

The protein resides in the cytoplasm. It carries out the reaction tRNA(Glu) + L-glutamate + ATP = L-glutamyl-tRNA(Glu) + AMP + diphosphate. Its function is as follows. Catalyzes the attachment of glutamate to tRNA(Glu) in a two-step reaction: glutamate is first activated by ATP to form Glu-AMP and then transferred to the acceptor end of tRNA(Glu). The protein is Glutamate--tRNA ligase of Shewanella baltica (strain OS155 / ATCC BAA-1091).